Consider the following 322-residue polypeptide: CXXC-type zinc finger protein 5 (322 aa).

Over residues 1–10 the composition is skewed to gly residues; sequence MSSLGGGSQD. The tract at residues 1 to 100 is disordered; the sequence is MSSLGGGSQD…SGGGSMMGGE (100 aa). Composition is skewed to low complexity over residues 11 to 20 and 28 to 52; these read AGGSSSSSTN and SGPK…VADD. Position 53 is a phosphothreonine (Thr-53). The segment covering 87–97 has biased composition (gly residues); sequence SSGGSGGGSMM. The CXXC-type zinc finger occupies 256–297; that stretch reads GKKKRKRCGMCAPCRRRINCEQCSSCRNRKTGHQICKFRKCE. The short motif at 257–262 is the Nuclear localization signal element; it reads KKKRKR. The Zn(2+) site is built by Cys-263, Cys-266, Cys-269, Cys-275, Cys-278, Cys-281, Cys-291, and Cys-296.

Interacts with DVL1. Interacts with RBPJ.

It localises to the nucleus. It is found in the cytoplasm. Its function is as follows. May indirectly participate in activation of the NF-kappa-B and MAPK pathways. Acts as a mediator of BMP4-mediated modulation of canonical Wnt signaling activity in neural stem cells. Required for DNA damage-induced ATM phosphorylation, p53 activation and cell cycle arrest. Involved in myelopoiesis. Transcription factor. Binds to the oxygen responsive element of COX4I2 and represses its transcription under hypoxia conditions (4% oxygen), as well as normoxia conditions (20% oxygen). May repress COX4I2 transactivation induced by CHCHD2 and RBPJ. Binds preferentially to DNA containing cytidine-phosphate-guanosine (CpG) dinucleotides over CpH (H=A, T, and C), hemimethylated-CpG and hemimethylated-hydroxymethyl-CpG. This Homo sapiens (Human) protein is CXXC-type zinc finger protein 5 (CXXC5).